We begin with the raw amino-acid sequence, 387 residues long: Cysteine desulfurase IscS (387 aa).

Pyridoxal 5'-phosphate-binding positions include 73–74, asparagine 155, glutamine 183, and 203–205; these read AT and SAH. Residue lysine 206 is modified to N6-(pyridoxal phosphate)lysine. Pyridoxal 5'-phosphate is bound at residue threonine 241. Catalysis depends on cysteine 328, which acts as the Cysteine persulfide intermediate. Cysteine 328 serves as a coordination point for [2Fe-2S] cluster.

Belongs to the class-V pyridoxal-phosphate-dependent aminotransferase family. NifS/IscS subfamily. Homodimer. Forms a heterotetramer with IscU, interacts with other sulfur acceptors. Requires pyridoxal 5'-phosphate as cofactor.

It localises to the cytoplasm. It carries out the reaction (sulfur carrier)-H + L-cysteine = (sulfur carrier)-SH + L-alanine. It functions in the pathway cofactor biosynthesis; iron-sulfur cluster biosynthesis. Master enzyme that delivers sulfur to a number of partners involved in Fe-S cluster assembly, tRNA modification or cofactor biosynthesis. Catalyzes the removal of elemental sulfur atoms from cysteine to produce alanine. Functions as a sulfur delivery protein for Fe-S cluster synthesis onto IscU, an Fe-S scaffold assembly protein, as well as other S acceptor proteins. The chain is Cysteine desulfurase IscS from Helicobacter pylori (strain Shi470).